A 145-amino-acid chain; its full sequence is 3-hydroxyacyl-[acyl-carrier-protein] dehydratase FabZ (145 aa).

Histidine 51 is a catalytic residue.

The protein belongs to the thioester dehydratase family. FabZ subfamily.

The protein resides in the cytoplasm. The enzyme catalyses a (3R)-hydroxyacyl-[ACP] = a (2E)-enoyl-[ACP] + H2O. In terms of biological role, involved in unsaturated fatty acids biosynthesis. Catalyzes the dehydration of short chain beta-hydroxyacyl-ACPs and long chain saturated and unsaturated beta-hydroxyacyl-ACPs. The sequence is that of 3-hydroxyacyl-[acyl-carrier-protein] dehydratase FabZ from Staphylococcus epidermidis (strain ATCC 35984 / DSM 28319 / BCRC 17069 / CCUG 31568 / BM 3577 / RP62A).